Consider the following 86-residue polypeptide: MSPARINVAACIDSSGSLPIELPVLSDAAGRELLNASPKMTESDDPVALPIIMRPTEPSCVCSVVLLLPRMRGPVIRISMGVPDWL.

This is an uncharacterized protein from Psittacid herpesvirus 1 (isolate Amazon parrot/-/97-0001/1997) (PsHV-1).